The chain runs to 1406 residues: DNA-directed RNA polymerase subunit beta' (1406 aa).

C72, C74, C87, and C90 together coordinate Zn(2+). Mg(2+) contacts are provided by D462, D464, and D466. Residues C816, C889, C896, and C899 each coordinate Zn(2+).

This sequence belongs to the RNA polymerase beta' chain family. In terms of assembly, the RNAP catalytic core consists of 2 alpha, 1 beta, 1 beta' and 1 omega subunit. When a sigma factor is associated with the core the holoenzyme is formed, which can initiate transcription. Requires Mg(2+) as cofactor. Zn(2+) is required as a cofactor.

It catalyses the reaction RNA(n) + a ribonucleoside 5'-triphosphate = RNA(n+1) + diphosphate. DNA-dependent RNA polymerase catalyzes the transcription of DNA into RNA using the four ribonucleoside triphosphates as substrates. In Psychrobacter sp. (strain PRwf-1), this protein is DNA-directed RNA polymerase subunit beta'.